A 290-amino-acid chain; its full sequence is 4-diphosphocytidyl-2-C-methyl-D-erythritol kinase (290 aa).

Lysine 10 is an active-site residue. 95–105 (PVAAGLAGGSS) lines the ATP pocket. The active site involves aspartate 137.

The protein belongs to the GHMP kinase family. IspE subfamily.

The enzyme catalyses 4-CDP-2-C-methyl-D-erythritol + ATP = 4-CDP-2-C-methyl-D-erythritol 2-phosphate + ADP + H(+). It functions in the pathway isoprenoid biosynthesis; isopentenyl diphosphate biosynthesis via DXP pathway; isopentenyl diphosphate from 1-deoxy-D-xylulose 5-phosphate: step 3/6. In terms of biological role, catalyzes the phosphorylation of the position 2 hydroxy group of 4-diphosphocytidyl-2C-methyl-D-erythritol. The polypeptide is 4-diphosphocytidyl-2-C-methyl-D-erythritol kinase (Geobacillus thermodenitrificans (strain NG80-2)).